The chain runs to 1877 residues: Phosphatidylinositol 4-kinase stt4 (1877 aa).

The PIK helical domain maps to 1305 to 1491 (PDSDAASSPI…KPILDRVMDK (187 aa)). Residues 1492–1625 (MINSLSGEDK…EVWQSAIFKV (134 aa)) are pleckstrin homology (PH) domain conferring phosphoinositide binding specificity. The PI3K/PI4K catalytic domain occupies 1593-1861 (DPEELAVNGT…LIEQSYANKR (269 aa)). The tract at residues 1599–1605 (VNGTEEE) is G-loop. Residues 1728–1736 (QFKDRHNGN) are catalytic loop. The tract at residues 1747–1771 (HIDFGFIFDIAPGGITFESAPFKLT) is activation loop.

This sequence belongs to the PI3/PI4-kinase family. Type III PI4K subfamily.

It is found in the cytoplasm. The enzyme catalyses a 1,2-diacyl-sn-glycero-3-phospho-(1D-myo-inositol) + ATP = a 1,2-diacyl-sn-glycero-3-phospho-(1D-myo-inositol 4-phosphate) + ADP + H(+). Functionally, acts on phosphatidylinositol (PI) in the first committed step in the production of the second messenger inositol 1,4,5,-trisphosphate. The polypeptide is Phosphatidylinositol 4-kinase stt4 (stt4) (Schizosaccharomyces pombe (strain 972 / ATCC 24843) (Fission yeast)).